A 249-amino-acid polypeptide reads, in one-letter code: Putative TrmH family tRNA/rRNA methyltransferase (249 aa).

Gly196, Ile216, and Leu225 together coordinate S-adenosyl-L-methionine.

This sequence belongs to the class IV-like SAM-binding methyltransferase superfamily. RNA methyltransferase TrmH family.

This is Putative TrmH family tRNA/rRNA methyltransferase from Staphylococcus haemolyticus (strain JCSC1435).